Consider the following 329-residue polypeptide: Short-chain dehydrogenase/reductase tropG (329 aa).

5 residues coordinate NADP(+): Lys-57, Asp-86, Asn-113, Tyr-203, and Lys-207. Catalysis depends on Tyr-203, which acts as the Proton acceptor. The Lowers pKa of active site Tyr role is filled by Lys-207.

It belongs to the short-chain dehydrogenases/reductases (SDR) family.

It functions in the pathway secondary metabolite biosynthesis. Functionally, short-chain dehydrogenase/reductase; part of the gene cluster that mediates the biosynthesis of the tropolone class of fungal maleic anhydrides. The pathway begins with the synthesis of 3-methylorcinaldehyde by the non-reducing polyketide synthase (PKS) tropA. 3-methylorcinaldehyde is the substrate for the FAD-dependent monooxygenase tropB to yield a dearomatized hydroxycyclohexadione. The 2-oxoglutarate-dependent dioxygenase tropC then performs the oxidative ring expansion to provide the first tropolone metabolite stipitaldehyde. Trop D converts stipitaldehyde into stipitacetal which is in turn converted to stipitalide by the short-chain dehydrogenase/reductase tropE. The next steps involve tropF, tropG, tropH, tropI and tropJ to form successive tropolone maleic anhydrides including stipitaldehydic, stipitatonic and stipitatic acids. This is Short-chain dehydrogenase/reductase tropG from Talaromyces stipitatus (strain ATCC 10500 / CBS 375.48 / QM 6759 / NRRL 1006) (Penicillium stipitatum).